The chain runs to 72 residues: Translation initiation factor IF-1 (72 aa).

Positions 1 to 72 (MAKEDTLEFP…TKGRINYRFK (72 aa)) constitute an S1-like domain.

The protein belongs to the IF-1 family. In terms of assembly, component of the 30S ribosomal translation pre-initiation complex which assembles on the 30S ribosome in the order IF-2 and IF-3, IF-1 and N-formylmethionyl-tRNA(fMet); mRNA recruitment can occur at any time during PIC assembly.

It is found in the cytoplasm. Functionally, one of the essential components for the initiation of protein synthesis. Stabilizes the binding of IF-2 and IF-3 on the 30S subunit to which N-formylmethionyl-tRNA(fMet) subsequently binds. Helps modulate mRNA selection, yielding the 30S pre-initiation complex (PIC). Upon addition of the 50S ribosomal subunit IF-1, IF-2 and IF-3 are released leaving the mature 70S translation initiation complex. This Ruegeria sp. (strain TM1040) (Silicibacter sp.) protein is Translation initiation factor IF-1.